We begin with the raw amino-acid sequence, 252 residues long: 3-deoxy-manno-octulosonate cytidylyltransferase (252 aa).

It belongs to the KdsB family.

The protein localises to the cytoplasm. The enzyme catalyses 3-deoxy-alpha-D-manno-oct-2-ulosonate + CTP = CMP-3-deoxy-beta-D-manno-octulosonate + diphosphate. It functions in the pathway nucleotide-sugar biosynthesis; CMP-3-deoxy-D-manno-octulosonate biosynthesis; CMP-3-deoxy-D-manno-octulosonate from 3-deoxy-D-manno-octulosonate and CTP: step 1/1. Its pathway is bacterial outer membrane biogenesis; lipopolysaccharide biosynthesis. Its function is as follows. Activates KDO (a required 8-carbon sugar) for incorporation into bacterial lipopolysaccharide in Gram-negative bacteria. The protein is 3-deoxy-manno-octulosonate cytidylyltransferase of Rhodospirillum rubrum (strain ATCC 11170 / ATH 1.1.1 / DSM 467 / LMG 4362 / NCIMB 8255 / S1).